Reading from the N-terminus, the 513-residue chain is ABC transporter H family member 2 (513 aa).

The 242-residue stretch at 39–280 folds into the ABC transporter domain; the sequence is LTMKNIHKTY…EHYQKLYKEC (242 aa). 75 to 82 lines the ATP pocket; that stretch reads GTSGGGKT. The tract at residues 291–471 is disordered; it reads VTSVFKNDDD…SSSYSNNNNN (181 aa). Residues 324 to 360 are compositionally biased toward low complexity; that stretch reads SYNNNNSNLNNNSNSNSNNNSNNNNSKNYASSSSSSS. Residues 361 to 386 show a composition bias toward polar residues; the sequence is VLNGKLSQSTVNNSSIYNHNNDSPFF. Residues 387–471 are compositionally biased toward low complexity; that stretch reads NSNNNNNINN…SSSYSNNNNN (85 aa).

It belongs to the ABC transporter superfamily.

This Dictyostelium discoideum (Social amoeba) protein is ABC transporter H family member 2 (abcH2).